Here is a 330-residue protein sequence, read N- to C-terminus: B-cell receptor CD22 (330 aa).

The signal sequence occupies residues 1-17 (MHLLGPWLLLLEYLAFS). Positions 18-136 (DSSKWAFEHP…MERIHLNVSE (119 aa)) constitute an Ig-like V-type domain. Residues 18-330 (DSSKWAFEHP…VFLQVQYAPE (313 aa)) lie on the Extracellular side of the membrane. 3 disulfide bridges follow: C37-C165, C42-C100, and C159-C217. N-linked (GlcNAc...) asparagine glycosylation is found at N65, N99, and N110. R118 contacts N-acetylneuraminate. N-linked (GlcNAc...) asparagine glycans are attached at residues N133, N162, N187, and N229. Ig-like C2-type domains are found at residues 141–233 (PHIQ…DTVQ) and 240–324 (PKLK…VFLQ). A disulfide bridge links C263 with C307.

Belongs to the immunoglobulin superfamily. SIGLEC (sialic acid binding Ig-like lectin) family. Predominantly monomer of isoform CD22-beta. Also found as heterodimer of isoform CD22-beta and a shorter isoform. Interacts with PTPN6/SHP-1, LYN, SYK, PIK3R1/PIK3R2 and PLCG1 upon phosphorylation. Interacts with GRB2, INPP5D and SHC1 upon phosphorylation. May form a complex with INPP5D/SHIP, GRB2 and SHC1.

It is found in the cell membrane. Its function is as follows. Most highly expressed siglec (sialic acid-binding immunoglobulin-like lectin) on B-cells that plays a role in various aspects of B-cell biology including differentiation, antigen presentation, and trafficking to bone marrow. Binds to alpha 2,6-linked sialic acid residues of surface molecules such as CD22 itself, CD45 and IgM in a cis configuration. Can also bind to ligands on other cells as an adhesion molecule in a trans configuration. Acts as an inhibitory coreceptor on the surface of B-cells and inhibits B-cell receptor induced signaling, characterized by inhibition of the calcium mobilization and cellular activation. Mechanistically, the immunoreceptor tyrosine-based inhibitory motif domain is phosphorylated by the Src kinase LYN, which in turn leads to the recruitment of the protein tyrosine phosphatase 1/PTPN6, leading to the negative regulation of BCR signaling. If this negative signaling from is of sufficient strength, apoptosis of the B-cell can be induced. This is B-cell receptor CD22 from Pongo pygmaeus (Bornean orangutan).